We begin with the raw amino-acid sequence, 178 residues long: Cytochrome b6-f complex iron-sulfur subunit (178 aa).

Residues 20–42 (LLTFGSVTGVALGALYPVVNYFI) traverse the membrane as a helical segment. The 97-residue stretch at 65–161 (ASGWLADHKE…VNVENDNVFV (97 aa)) folds into the Rieske domain. [2Fe-2S] cluster contacts are provided by C107, H109, C125, and H128. Residues C112 and C127 are joined by a disulfide bond.

Belongs to the Rieske iron-sulfur protein family. As to quaternary structure, the 4 large subunits of the cytochrome b6-f complex are cytochrome b6, subunit IV (17 kDa polypeptide, PetD), cytochrome f and the Rieske protein, while the 4 small subunits are PetG, PetL, PetM and PetN. The complex functions as a dimer. [2Fe-2S] cluster serves as cofactor.

It is found in the cellular thylakoid membrane. The enzyme catalyses 2 oxidized [plastocyanin] + a plastoquinol + 2 H(+)(in) = 2 reduced [plastocyanin] + a plastoquinone + 4 H(+)(out). In terms of biological role, component of the cytochrome b6-f complex, which mediates electron transfer between photosystem II (PSII) and photosystem I (PSI), cyclic electron flow around PSI, and state transitions. This is Cytochrome b6-f complex iron-sulfur subunit from Synechococcus sp. (strain RCC307).